A 436-amino-acid chain; its full sequence is Small ribosomal subunit protein uS5m (436 aa).

Residues 152 to 218 (FETYCLEVKR…GMASRKLFHV (67 aa)) form the S5 DRBM domain. Residues 417 to 436 (GVEPMPLGIGLSHVVPKKDD) are disordered.

The protein belongs to the universal ribosomal protein uS5 family. In terms of assembly, component of the mitochondrial ribosome small subunit (28S) which comprises a 12S rRNA and about 30 distinct proteins.

It is found in the mitochondrion. This Caenorhabditis elegans protein is Small ribosomal subunit protein uS5m (mrps-5).